The following is a 251-amino-acid chain: Ubiquinone/menaquinone biosynthesis C-methyltransferase UbiE (251 aa).

Residues Thr74, Asp95, 123–124, and Ser140 contribute to the S-adenosyl-L-methionine site; that span reads NA.

This sequence belongs to the class I-like SAM-binding methyltransferase superfamily. MenG/UbiE family.

The enzyme catalyses a 2-demethylmenaquinol + S-adenosyl-L-methionine = a menaquinol + S-adenosyl-L-homocysteine + H(+). It carries out the reaction a 2-methoxy-6-(all-trans-polyprenyl)benzene-1,4-diol + S-adenosyl-L-methionine = a 5-methoxy-2-methyl-3-(all-trans-polyprenyl)benzene-1,4-diol + S-adenosyl-L-homocysteine + H(+). It participates in quinol/quinone metabolism; menaquinone biosynthesis; menaquinol from 1,4-dihydroxy-2-naphthoate: step 2/2. Its pathway is cofactor biosynthesis; ubiquinone biosynthesis. Methyltransferase required for the conversion of demethylmenaquinol (DMKH2) to menaquinol (MKH2) and the conversion of 2-polyprenyl-6-methoxy-1,4-benzoquinol (DDMQH2) to 2-polyprenyl-3-methyl-6-methoxy-1,4-benzoquinol (DMQH2). The polypeptide is Ubiquinone/menaquinone biosynthesis C-methyltransferase UbiE (Pectobacterium atrosepticum (strain SCRI 1043 / ATCC BAA-672) (Erwinia carotovora subsp. atroseptica)).